The chain runs to 304 residues: Acetyl-coenzyme A carboxylase carboxyl transferase subunit beta (304 aa).

Residues 23 to 292 (VWTKCDSCGQ…PNPEAPREGV (270 aa)) form the CoA carboxyltransferase N-terminal domain. The Zn(2+) site is built by Cys27, Cys30, Cys46, and Cys49. The C4-type zinc finger occupies 27–49 (CDSCGQVLYRAELERNLEVCPKC). Residues 284 to 304 (NPEAPREGVVVPPVPDQEPEA) are disordered. Over residues 295–304 (PPVPDQEPEA) the composition is skewed to pro residues.

It belongs to the AccD/PCCB family. In terms of assembly, acetyl-CoA carboxylase is a heterohexamer composed of biotin carboxyl carrier protein (AccB), biotin carboxylase (AccC) and two subunits each of ACCase subunit alpha (AccA) and ACCase subunit beta (AccD). It depends on Zn(2+) as a cofactor.

Its subcellular location is the cytoplasm. The enzyme catalyses N(6)-carboxybiotinyl-L-lysyl-[protein] + acetyl-CoA = N(6)-biotinyl-L-lysyl-[protein] + malonyl-CoA. It participates in lipid metabolism; malonyl-CoA biosynthesis; malonyl-CoA from acetyl-CoA: step 1/1. In terms of biological role, component of the acetyl coenzyme A carboxylase (ACC) complex. Biotin carboxylase (BC) catalyzes the carboxylation of biotin on its carrier protein (BCCP) and then the CO(2) group is transferred by the transcarboxylase to acetyl-CoA to form malonyl-CoA. The polypeptide is Acetyl-coenzyme A carboxylase carboxyl transferase subunit beta (Shigella boydii serotype 18 (strain CDC 3083-94 / BS512)).